The following is a 71-amino-acid chain: Frenatin 2.3S (71 aa).

Residues 1 to 22 (MAFLKKSLFLVLFLGLVSLSMG) form the signal peptide. The interval 21-56 (MGEREKREEEEEEEEENKEEEANEEGKGESEEKRGL) is disordered. A propeptide spanning residues 23–54 (EREKREEEEEEEEENKEEEANEEGKGESEEKR) is cleaved from the precursor. A compositionally biased stretch (acidic residues) spans 28–43 (EEEEEEEEENKEEEAN). Basic and acidic residues predominate over residues 44 to 55 (EEGKGESEEKRG). G70 bears the Glycine amide; in Frenatin 2.1S mark.

This sequence belongs to the frog skin active peptide (FSAP) family. Frenatin subfamily. Post-translationally, frenatin 2.3S is not amidated. As to expression, expressed by the skin glands.

The protein resides in the secreted. Antimicrobial peptide with potent activity against Gram-negative bacteria. Shows immunostimulatory actions both in vitro and in vivo. In vitro, is cytotoxic to non-small cell lung adenocarcinoma A549 cells. Also, stimulates production of pro-inflammatory cytokines by mouse peritoneal macrophages and down-regulates production of the anti-inflammatory cytokine IL-10 by lipopolysaccharide (LPS)-stimulated cells. In vivo, intraperitoneal injection in mice enhances the activation state and homing capacity of Th1 type lymphocytes and promotes the recruitment, activation and tumoricidal capacities of peritoneal NK cells. Has a very weak activity in stimulation of insulin release and a weak hemolytic activity. Functionally, antimicrobial peptide with potent activity against some Gram-positive and Gram-negative bacteria. Has a multifunctional mode of action. It displays depolarization and bacterial cell leakage, and can also internalize into bacterial cells and alter specific gene expression involved in bacterial resistance mechanisms. Does not agglutinate bacteria and lipid vesicles, even a high concentrations. Also displays moderate cellular protection against yellow fever virus (YFV)-infected Vero cells without causing significant cytotoxicity. Shows a weak hemolytic activity, and is not cytotoxic to monocytes. Frenatin 2.3S (version without Gly-71) shows no or very weak antibacterial activity, shows no or very weak cytotoxicity to lung adenocarcinoma A549 cells and shows very weak hemolysis. It only stimulates production of pro-inflammatory cytokines IL-23 (but not IL-1beta and TNF-alpha) by mouse peritoneal macrophages and has no effect on the production of the anti-inflammatory cytokine IL-10. Frenatin 2.3S (version without Gly-71) very weakly stimulates insulin release. The chain is Frenatin 2.3S from Sphaenorhynchus lacteus (Orinoco lime treefrog).